A 278-amino-acid chain; its full sequence is Small ribosomal subunit protein uS3 (278 aa).

The region spanning V39–R107 is the KH type-2 domain. A disordered region spans residues V217–S278. The segment covering P230–G239 has biased composition (basic and acidic residues).

It belongs to the universal ribosomal protein uS3 family. Part of the 30S ribosomal subunit. Forms a tight complex with proteins S10 and S14.

In terms of biological role, binds the lower part of the 30S subunit head. Binds mRNA in the 70S ribosome, positioning it for translation. The sequence is that of Small ribosomal subunit protein uS3 from Aromatoleum aromaticum (strain DSM 19018 / LMG 30748 / EbN1) (Azoarcus sp. (strain EbN1)).